The following is a 395-amino-acid chain: Pyruvate synthase subunit PorA (395 aa).

In terms of assembly, heterotetramer of one alpha, one beta, one delta and one gamma chain.

The catalysed reaction is 2 oxidized [2Fe-2S]-[ferredoxin] + pyruvate + CoA = 2 reduced [2Fe-2S]-[ferredoxin] + acetyl-CoA + CO2 + H(+). This Pyrococcus horikoshii (strain ATCC 700860 / DSM 12428 / JCM 9974 / NBRC 100139 / OT-3) protein is Pyruvate synthase subunit PorA (porA).